Consider the following 655-residue polypeptide: Probable alpha-galactosidase D (655 aa).

An N-terminal signal peptide occupies residues 1–16; it reads MLPKIFYLSLLPAALG. Residues Asn47 and Asn91 are each glycosylated (N-linked (GlcNAc...) asparagine). An intrachain disulfide couples Cys124 to Cys155. The active-site Nucleophile is Asp153. N-linked (GlcNAc...) asparagine glycosylation is found at Asn180 and Asn189. 198-202 provides a ligand contact to substrate; that stretch reads EWGID. The active-site Proton donor is the Asp220. Asn349, Asn436, Asn458, Asn503, Asn537, Asn541, and Asn580 each carry an N-linked (GlcNAc...) asparagine glycan.

Belongs to the glycosyl hydrolase 27 family.

It localises to the secreted. It catalyses the reaction Hydrolysis of terminal, non-reducing alpha-D-galactose residues in alpha-D-galactosides, including galactose oligosaccharides, galactomannans and galactolipids.. Hydrolyzes a variety of simple alpha-D-galactoside as well as more complex molecules such as oligosaccharides and polysaccharides. In Aspergillus flavus (strain ATCC 200026 / FGSC A1120 / IAM 13836 / NRRL 3357 / JCM 12722 / SRRC 167), this protein is Probable alpha-galactosidase D (aglD).